The primary structure comprises 955 residues: 26S proteasome non-ATPase regulatory subunit 1 (955 aa).

Positions Pro-279–Glu-313 are disordered. Residues Ser-290 to Pro-303 are compositionally biased toward basic and acidic residues. 10 PC repeats span residues Thr-403–Ala-436, Gly-441–Arg-474, Gly-476–Glu-510, Ala-511–Leu-545, Gly-547–Arg-580, Ser-581–Arg-616, Ala-617–Arg-649, Gly-651–Gln-685, Gly-686–Ala-726, and Gly-729–Val-761. 2 disordered regions span residues Ala-839–Leu-879 and Ala-932–Asp-955. Composition is skewed to basic and acidic residues over residues Lys-842–Glu-854 and Thr-861–Glu-874. Acidic residues predominate over residues Glu-938–Asp-955.

Belongs to the proteasome subunit S1 family. In terms of assembly, component of the 19S proteasome regulatory particle complex. The 26S proteasome consists of a 20S core particle (CP) and two 19S regulatory subunits (RP). The regulatory particle is made of a lid composed of 9 subunits, a base containing 6 ATPases and few additional components including PSMD1. Interacts with ADRM1.

Functionally, component of the 26S proteasome, a multiprotein complex involved in the ATP-dependent degradation of ubiquitinated proteins. This complex plays a key role in the maintenance of protein homeostasis by removing misfolded or damaged proteins, which could impair cellular functions, and by removing proteins whose functions are no longer required. Therefore, the proteasome participates in numerous cellular processes, including cell cycle progression, apoptosis, or DNA damage repair. This Gallus gallus (Chicken) protein is 26S proteasome non-ATPase regulatory subunit 1 (PSMD1).